The following is a 105-amino-acid chain: Protein U4 (105 aa).

A helical membrane pass occupies residues 5-25; that stretch reads FLLFLLLLVLVINPSLVVNMV.

This sequence belongs to the nanovirus U4 protein family.

The protein localises to the membrane. The sequence is that of Protein U4 (DNA-U4) from Faba bean necrotic yellows virus (isolate Egyptian EV1-93) (FBNYV).